Reading from the N-terminus, the 142-residue chain is Small heat shock protein IbpB (142 aa).

The sHSP domain maps to 26-137 (TGESQSFPPY…APQRIAISER (112 aa)).

It belongs to the small heat shock protein (HSP20) family. As to quaternary structure, homodimer. Forms homomultimers of about 100-150 subunits at optimal growth temperatures. Conformation changes to oligomers at high temperatures or high ionic concentrations. The decrease in size of the multimers is accompanied by an increase in chaperone activity.

It is found in the cytoplasm. In terms of biological role, associates with aggregated proteins, together with IbpA, to stabilize and protect them from irreversible denaturation and extensive proteolysis during heat shock and oxidative stress. Aggregated proteins bound to the IbpAB complex are more efficiently refolded and reactivated by the ATP-dependent chaperone systems ClpB and DnaK/DnaJ/GrpE. Its activity is ATP-independent. The polypeptide is Small heat shock protein IbpB (Citrobacter koseri (strain ATCC BAA-895 / CDC 4225-83 / SGSC4696)).